Here is a 110-residue protein sequence, read N- to C-terminus: Iron-sulfur cluster assembly protein CyaY (110 aa).

The protein belongs to the frataxin family.

Involved in iron-sulfur (Fe-S) cluster assembly. May act as a regulator of Fe-S biogenesis. This Pseudomonas putida (strain W619) protein is Iron-sulfur cluster assembly protein CyaY.